A 152-amino-acid polypeptide reads, in one-letter code: Acidic phospholipase A2 1 (152 aa).

The N-terminal stretch at 1-19 (MNPAYFLVLAAVCVSLLGA) is a signal peptide. Positions 20–27 (ANIPPQPL) are excised as a propeptide. 7 disulfides stabilise this stretch: Cys-38/Cys-104, Cys-54/Cys-151, Cys-56/Cys-72, Cys-71/Cys-132, Cys-78/Cys-125, Cys-88/Cys-118, and Cys-111/Cys-123. Residues Tyr-55, Gly-57, and Gly-59 each coordinate Ca(2+). His-75 is an active-site residue. Asp-76 is a binding site for Ca(2+). Asp-126 is a catalytic residue.

The protein belongs to the phospholipase A2 family. Group I subfamily. D49 sub-subfamily. The cofactor is Ca(2+). In terms of tissue distribution, expressed by the venom gland.

Its subcellular location is the secreted. The enzyme catalyses a 1,2-diacyl-sn-glycero-3-phosphocholine + H2O = a 1-acyl-sn-glycero-3-phosphocholine + a fatty acid + H(+). Its function is as follows. PLA2 catalyzes the calcium-dependent hydrolysis of the 2-acyl groups in 3-sn-phosphoglycerides. This Bungarus candidus (Malayan krait) protein is Acidic phospholipase A2 1.